The following is a 123-amino-acid chain: Protein HesB, vegetative (123 aa).

The protein belongs to the HesB/IscA family.

In terms of biological role, may be required for efficient nitrogen fixation. The chain is Protein HesB, vegetative (hesB2) from Trichormus variabilis (strain ATCC 29413 / PCC 7937) (Anabaena variabilis).